Reading from the N-terminus, the 435-residue chain is MTQLEAARKGKITEEMAYVAEKEGVSPEFVREGVAAGRIVIPRNPNHKTLTDFKGIGEGLSVKVNANLGTSYDYVNVEEEVEKARVAIQYGADTVMDLSTGGDLKAIRKRILEVATVPLGTVPIYEAEFRAARRKNFFDMSADELFQVIEEHGKEGVDYITVHVGVTLKNLEVYRNSPRTTGIVSRGGGLMAAWMLHRGEENPLYARFDDLLDIARTYDMTLSLGDGLRPGSLADSTDRAQIAELLTIGELVERARRAGVQAMVEGPGHIPLNEVAANVQIQKKLTGHAPFYILGMLPVDTAAGFDHIAGAIGGALAGWWGADMLCYLTPAEHLGLPTPEHVKQGVIAFKIAAHAADVARGNKRALERNRRMSEARYRLDWEGQFALALFPEEARRLKEERGSKTKACSMCGPFCPMNLVEAVLKGKGRMELPVA.

Substrate-binding positions include Asn67, Met96, Tyr125, His163, 185–187 (SRG), 226–229 (DGLR), and Glu265. His269 lines the Zn(2+) pocket. Position 292 (Tyr292) interacts with substrate. Position 333 (His333) interacts with Zn(2+). 3 residues coordinate [4Fe-4S] cluster: Cys408, Cys411, and Cys415.

The protein belongs to the ThiC family. The cofactor is [4Fe-4S] cluster.

It carries out the reaction 5-amino-1-(5-phospho-beta-D-ribosyl)imidazole + S-adenosyl-L-methionine = 4-amino-2-methyl-5-(phosphooxymethyl)pyrimidine + CO + 5'-deoxyadenosine + formate + L-methionine + 3 H(+). Its pathway is cofactor biosynthesis; thiamine diphosphate biosynthesis. In terms of biological role, catalyzes the synthesis of the hydroxymethylpyrimidine phosphate (HMP-P) moiety of thiamine from aminoimidazole ribotide (AIR) in a radical S-adenosyl-L-methionine (SAM)-dependent reaction. The sequence is that of Phosphomethylpyrimidine synthase from Thermus thermophilus (strain ATCC BAA-163 / DSM 7039 / HB27).